The chain runs to 90 residues: MTEDQARRSGGVGRRRFGARRKVCMFCADQIRVVDYKDVKRLQRCMSERGKILPRRRTGVCARHQRSLTVAIKRARHMALLPFVAAHIRS.

The protein belongs to the bacterial ribosomal protein bS18 family. As to quaternary structure, part of the 30S ribosomal subunit. Forms a tight heterodimer with protein bS6.

Functionally, binds as a heterodimer with protein bS6 to the central domain of the 16S rRNA, where it helps stabilize the platform of the 30S subunit. The polypeptide is Small ribosomal subunit protein bS18B (Roseiflexus sp. (strain RS-1)).